Reading from the N-terminus, the 268-residue chain is Small ribosomal subunit protein uS10m (268 aa).

The transit peptide at Met-1–Lys-64 directs the protein to the mitochondrion.

This sequence belongs to the universal ribosomal protein uS10 family. Component of the mitochondrial small ribosomal subunit (mt-SSU). Mature N.crassa 74S mitochondrial ribosomes consist of a small (37S) and a large (54S) subunit. The 37S small subunit contains a 16S ribosomal RNA (16S mt-rRNA) and 32 different proteins. The 54S large subunit contains a 23S rRNA (23S mt-rRNA) and 42 different proteins.

It is found in the mitochondrion. In terms of biological role, component of the mitochondrial ribosome (mitoribosome), a dedicated translation machinery responsible for the synthesis of mitochondrial genome-encoded proteins, including at least some of the essential transmembrane subunits of the mitochondrial respiratory chain. The mitoribosomes are attached to the mitochondrial inner membrane and translation products are cotranslationally integrated into the membrane. The sequence is that of Small ribosomal subunit protein uS10m (mrp-10) from Neurospora crassa (strain ATCC 24698 / 74-OR23-1A / CBS 708.71 / DSM 1257 / FGSC 987).